Reading from the N-terminus, the 226-residue chain is Phosphoribosyl-dephospho-CoA transferase (226 aa).

Residues aspartate 148 and aspartate 150 contribute to the active site.

Belongs to the MdcG family.

It catalyses the reaction apo-[malonate decarboxylase ACP] + 2'-(5''-triphospho-alpha-D-ribosyl)-3'-dephospho-CoA = holo-[malonate decarboxylase ACP] + diphosphate. Functionally, transfers 2'-(5-triphosphoribosyl)-3'-dephosphocoenzyme-A to the apo-[acyl-carrier-protein] of the malonate decarboxylase to yield holo-[acyl-carrier-protein]. This Bradyrhizobium diazoefficiens (strain JCM 10833 / BCRC 13528 / IAM 13628 / NBRC 14792 / USDA 110) protein is Phosphoribosyl-dephospho-CoA transferase.